The following is a 501-amino-acid chain: Glutamate--tRNA ligase (501 aa).

Residues 21-31 carry the 'HIGH' region motif; it reads PSPTGTPHVGL. The short motif at 266-270 is the 'KMSKS' region element; it reads KLSKR. Lys269 serves as a coordination point for ATP.

This sequence belongs to the class-I aminoacyl-tRNA synthetase family. Glutamate--tRNA ligase type 1 subfamily. Monomer.

The protein localises to the cytoplasm. The catalysed reaction is tRNA(Glu) + L-glutamate + ATP = L-glutamyl-tRNA(Glu) + AMP + diphosphate. Functionally, catalyzes the attachment of glutamate to tRNA(Glu) in a two-step reaction: glutamate is first activated by ATP to form Glu-AMP and then transferred to the acceptor end of tRNA(Glu). The protein is Glutamate--tRNA ligase of Kineococcus radiotolerans (strain ATCC BAA-149 / DSM 14245 / SRS30216).